A 446-amino-acid polypeptide reads, in one-letter code: NADH-quinone oxidoreductase subunit D (446 aa).

Belongs to the complex I 49 kDa subunit family. In terms of assembly, NDH-1 is composed of 14 different subunits. Subunits NuoB, C, D, E, F, and G constitute the peripheral sector of the complex.

The protein localises to the cell membrane. It catalyses the reaction a quinone + NADH + 5 H(+)(in) = a quinol + NAD(+) + 4 H(+)(out). Functionally, NDH-1 shuttles electrons from NADH, via FMN and iron-sulfur (Fe-S) centers, to quinones in the respiratory chain. The immediate electron acceptor for the enzyme in this species is believed to be a menaquinone. Couples the redox reaction to proton translocation (for every two electrons transferred, four hydrogen ions are translocated across the cytoplasmic membrane), and thus conserves the redox energy in a proton gradient. In Mycobacterium sp. (strain JLS), this protein is NADH-quinone oxidoreductase subunit D.